We begin with the raw amino-acid sequence, 438 residues long: MSSGKPHLNLVVIGHVDHGKSTLVGHILYRLGLVDQKTIQMLEEEAKKRGKESFKFAWLLDKLKEERERGVTIALTYMKFETRRYIFTIIDAPGHRDFVKNMITGASQADAALLVVSARKGEFEAGMSPEGQTREHAILAKTMGINQLIVAVNKMDATEPPWSQKRYEQIKTILGKFLKSLGYDISKVPFIPVSAWTGDNLIERSPNMPWYNGPTLVEALDSLEPPPKPIDKPLRIPIQDVYAISGVGTVPVGRVETGVLRVGDKVVFMPPAKVGEVRSIETHHVRIEKAEPGDNIGFNVRGVSKRDIRRGDVAGHLDNPPTVAEEFTARVFIIWHPTAITVGYTPVIHIHTASVASRIVEIKAKLDPRTGKVVEENPQFIKMGDAAIVRFKPIKPLVVEKYSDFPPLGRFAMRDMGKTIGIGVVVDVKPMKIEIKTK.

The region spanning 5-228 (KPHLNLVVIG…ALDSLEPPPK (224 aa)) is the tr-type G domain. The interval 14 to 21 (GHVDHGKS) is G1. GTP is bound at residue 14–21 (GHVDHGKS). Ser21 is a binding site for Mg(2+). Residues 70-74 (GVTIA) form a G2 region. Positions 91-94 (DAPG) are G3. Residues 91-95 (DAPGH) and 153-156 (NKMD) contribute to the GTP site. The G4 stretch occupies residues 153–156 (NKMD). A G5 region spans residues 194–196 (SAW).

The protein belongs to the TRAFAC class translation factor GTPase superfamily. Classic translation factor GTPase family. EF-Tu/EF-1A subfamily.

Its subcellular location is the cytoplasm. It carries out the reaction GTP + H2O = GDP + phosphate + H(+). GTP hydrolase that promotes the GTP-dependent binding of aminoacyl-tRNA to the A-site of ribosomes during protein biosynthesis. In Staphylothermus marinus (strain ATCC 43588 / DSM 3639 / JCM 9404 / F1), this protein is Elongation factor 1-alpha.